Reading from the N-terminus, the 93-residue chain is Cobalt transport protein CbiN (93 aa).

The next 2 membrane-spanning stretches (helical) occupy residues 5–25 (LMLL…NHGG) and 63–83 (LLFT…LGYC).

Belongs to the CbiN family. Forms an energy-coupling factor (ECF) transporter complex composed of an ATP-binding protein (A component, CbiO), a transmembrane protein (T component, CbiQ) and 2 possible substrate-capture proteins (S components, CbiM and CbiN) of unknown stoichimetry.

The protein localises to the cell inner membrane. The protein operates within cofactor biosynthesis; adenosylcobalamin biosynthesis. In terms of biological role, part of the energy-coupling factor (ECF) transporter complex CbiMNOQ involved in cobalt import. This chain is Cobalt transport protein CbiN, found in Salmonella gallinarum (strain 287/91 / NCTC 13346).